The sequence spans 515 residues: Glucose-6-phosphate 1-dehydrogenase X (515 aa).

Alanine 2 bears the N-acetylalanine mark. NADP(+) contacts are provided by residues 38–45 (GASGDLAK), arginine 72, tyrosine 147, and lysine 171. Residues lysine 171, 201–205 (HYLGK), glutamate 239, and aspartate 258 contribute to the D-glucose 6-phosphate site. Histidine 263 serves as the catalytic Proton acceptor. Arginine 357 contacts NADP(+). Residues lysine 360 and arginine 365 each coordinate D-glucose 6-phosphate. Positions 366, 370, and 393 each coordinate NADP(+). A D-glucose 6-phosphate-binding site is contributed by glutamine 395. NADP(+)-binding positions include 401–403 (YTK), 421–423 (DLT), arginine 487, and tyrosine 503. The residue at position 507 (tyrosine 507) is a Phosphotyrosine. Tryptophan 509 serves as a coordination point for NADP(+).

The protein belongs to the glucose-6-phosphate dehydrogenase family. As to quaternary structure, homotetramer; dimer of dimers. Interacts with SIRT2; the interaction is enhanced by H(2)O(2) treatment. Forms a ternary complex with ALDOB and TP53; this interaction is direct. ALDOB stabilizes the complex inhibiting G6PD activity and keeping oxidative pentose phosphate metabolism in check. Post-translationally, acetylated by ELP3 at Lys-403; acetylation inhibits its homodimerization and enzyme activity. Deacetylated by SIRT2 at Lys-403; deacetylation stimulates its enzyme activity.

It localises to the cytoplasm. The protein resides in the cytosol. The protein localises to the membrane. It catalyses the reaction D-glucose 6-phosphate + NADP(+) = 6-phospho-D-glucono-1,5-lactone + NADPH + H(+). Its pathway is carbohydrate degradation; pentose phosphate pathway; D-ribulose 5-phosphate from D-glucose 6-phosphate (oxidative stage): step 1/3. In terms of biological role, catalyzes the rate-limiting step of the oxidative pentose-phosphate pathway, which represents a route for the dissimilation of carbohydrates besides glycolysis. The main function of this enzyme is to provide reducing power (NADPH) and pentose phosphates for fatty acid and nucleic acid synthesis. This is Glucose-6-phosphate 1-dehydrogenase X (G6pdx) from Mus musculus (Mouse).